The following is a 387-amino-acid chain: Chaperone protein DnaJ (387 aa).

The region spanning Asp-5–Gly-70 is the J domain. Residues Gly-144 to Asn-226 form a CR-type zinc finger. Zn(2+) is bound by residues Cys-157, Cys-160, Cys-174, Cys-177, Cys-200, Cys-203, Cys-214, and Cys-217. CXXCXGXG motif repeat units follow at residues Cys-157–Gly-164, Cys-174–Gly-181, Cys-200–Gly-207, and Cys-214–Gly-221.

The protein belongs to the DnaJ family. Homodimer. Zn(2+) is required as a cofactor.

The protein localises to the cytoplasm. Functionally, participates actively in the response to hyperosmotic and heat shock by preventing the aggregation of stress-denatured proteins and by disaggregating proteins, also in an autonomous, DnaK-independent fashion. Unfolded proteins bind initially to DnaJ; upon interaction with the DnaJ-bound protein, DnaK hydrolyzes its bound ATP, resulting in the formation of a stable complex. GrpE releases ADP from DnaK; ATP binding to DnaK triggers the release of the substrate protein, thus completing the reaction cycle. Several rounds of ATP-dependent interactions between DnaJ, DnaK and GrpE are required for fully efficient folding. Also involved, together with DnaK and GrpE, in the DNA replication of plasmids through activation of initiation proteins. This chain is Chaperone protein DnaJ, found in Clostridium perfringens (strain 13 / Type A).